Reading from the N-terminus, the 273-residue chain is Gamma-glutamyl cyclotransferase gliK (273 aa).

Residues 227 to 243 (WLGWIILTLYGLMWSYH) form a helical membrane-spanning segment.

Belongs to the class-I pyridoxal-phosphate-dependent aminotransferase family.

It localises to the membrane. The enzyme catalyses an alpha-(gamma-L-glutamyl)-L-amino acid = 5-oxo-L-proline + an L-alpha-amino acid. The protein operates within mycotoxin biosynthesis. In terms of biological role, gamma-glutamyl cyclotransferase-like protein; part of the gene cluster that mediates the biosynthesis of gliotoxin, a member of the epipolythiodioxopiperazine (ETP) class of toxins characterized by a disulfide bridged cyclic dipeptide. The first step in gliotoxin biosynthesis is the condensation of serine and phenylalanine to form the cyclo-L-phenylalanyl-L-serine diketopiperazine (DKP) by the NRPS gliP. GliP is also able to produce the DKP cyclo-L-tryptophanyl-L-serine, suggesting that the substrate specificity of the first adenylation (A) domain in gliP is sufficiently relaxed to accommodate both L-Phe and L-Trp. The cytochrome P450 monooxygenase gliC has been shown to catalyze the subsequent hydroxylation of the alpha-carbon of L-Phe in cyclo-L-phenylalanyl-L-serine whereas the second cytochrome P450 enzyme, gliF, is presumably involved in the modification of the DKP side chain. The glutathione S-transferase (GST) gliG then forms a bis-glutathionylated biosynthetic intermediate which is responsible for the sulfurization of gliotoxin. This bis-glutathionylated intermediate is subsequently processed by the gamma-glutamyl cyclotransferase gliK to remove both gamma-glutamyl moieties. Subsequent processing via gliI yields a biosynthetic intermediate, which is N-methylated via the N-methyltransferase gliN, before the gliotoxin oxidoreductase gliT-mediated disulfide bridge closure. GliN-mediated amide methylation confers stability to ETP, damping the spontaneous formation of tri- and tetrasulfides. Intracellular dithiol gliotoxin oxidized by gliT is subsequently effluxed by gliA. Gliotoxin contributes to pathogenesis during invasive aspergillosis. In macrophages and neutrophils, gliotoxin showed inhibition of various different cell functions including cytokine production, antigen presentation, phagocytosis, and production of reactive oxygen species. The sequence is that of Gamma-glutamyl cyclotransferase gliK from Aspergillus fumigatus (strain ATCC MYA-4609 / CBS 101355 / FGSC A1100 / Af293) (Neosartorya fumigata).